The following is a 144-amino-acid chain: UPF0178 protein Exig_1155 (144 aa).

A disordered region spans residues 110–144; the sequence is IRRAGGRTKGPKKRTRQEDASFEQSFSRLLTEKTD. The segment covering 113–124 has biased composition (basic residues); it reads AGGRTKGPKKRT.

This sequence belongs to the UPF0178 family.

The protein is UPF0178 protein Exig_1155 of Exiguobacterium sibiricum (strain DSM 17290 / CCUG 55495 / CIP 109462 / JCM 13490 / 255-15).